We begin with the raw amino-acid sequence, 720 residues long: Catalase-peroxidase (720 aa).

A cross-link (tryptophyl-tyrosyl-methioninium (Trp-Tyr) (with M-233)) is located at residues 82 to 207 (WHSAGTYRTF…LGNTVMGLIY (126 aa)). The active-site Proton acceptor is the histidine 83. The tryptophyl-tyrosyl-methioninium (Tyr-Met) (with W-82) cross-link spans 207–233 (YVNPEGPNGEPDLEGSAKNIRESFGKM). Histidine 248 is a binding site for heme b.

Belongs to the peroxidase family. Peroxidase/catalase subfamily. As to quaternary structure, homodimer or homotetramer. Heme b serves as cofactor. In terms of processing, formation of the three residue Trp-Tyr-Met cross-link is important for the catalase, but not the peroxidase activity of the enzyme.

The catalysed reaction is H2O2 + AH2 = A + 2 H2O. The enzyme catalyses 2 H2O2 = O2 + 2 H2O. Functionally, bifunctional enzyme with both catalase and broad-spectrum peroxidase activity. The chain is Catalase-peroxidase from Halobacterium salinarum (strain ATCC 29341 / DSM 671 / R1).